The sequence spans 399 residues: E3 ubiquitin-protein ligase APD4 (399 aa).

The next 2 helical transmembrane spans lie at 42-62 and 284-304; these read FGIIMGLWFFASVCLIFGVYG and LIAYGSFTGVLLSFMLVAIHF. Residues 348-387 form an RING-type zinc finger; it reads CAICFDAPRDCCFLPCGHCVSCYQCGTKIKRTKGRCPICR.

As to expression, expressed in the shoot apical meristems (SAM), root tips and inflorescences.

It is found in the endomembrane system. Its subcellular location is the vacuole membrane. It catalyses the reaction S-ubiquitinyl-[E2 ubiquitin-conjugating enzyme]-L-cysteine + [acceptor protein]-L-lysine = [E2 ubiquitin-conjugating enzyme]-L-cysteine + N(6)-ubiquitinyl-[acceptor protein]-L-lysine.. It functions in the pathway protein modification; protein ubiquitination. Functionally, involved in pollen mitosis II (PMII) regulation during male gametogenesis. The protein is E3 ubiquitin-protein ligase APD4 of Arabidopsis thaliana (Mouse-ear cress).